A 576-amino-acid polypeptide reads, in one-letter code: Formate--tetrahydrofolate ligase 2 (576 aa).

An ATP-binding site is contributed by Thr69 to Thr76.

It belongs to the formate--tetrahydrofolate ligase family.

The enzyme catalyses (6S)-5,6,7,8-tetrahydrofolate + formate + ATP = (6R)-10-formyltetrahydrofolate + ADP + phosphate. It participates in one-carbon metabolism; tetrahydrofolate interconversion. The chain is Formate--tetrahydrofolate ligase 2 from Rubrobacter xylanophilus (strain DSM 9941 / JCM 11954 / NBRC 16129 / PRD-1).